The primary structure comprises 538 residues: Cytochrome P450 monooxygenase flvC (538 aa).

The chain crosses the membrane as a helical span at residues 17–37 (TVLIAGLLVYWVGSAIFLAVL). Cys-478 serves as a coordination point for heme.

It belongs to the cytochrome P450 family. It depends on heme as a cofactor.

The protein localises to the membrane. It catalyses the reaction pre-flavunoidine + reduced [NADPH--hemoprotein reductase] + O2 = 10-hydroxy-pre-flavunoidine + oxidized [NADPH--hemoprotein reductase] + H2O + H(+). Its pathway is secondary metabolite biosynthesis; terpenoid biosynthesis. Cytochrome P450 monooxygenase; part of the gene cluster that mediates the biosynthesis of flavunoidine, an alkaloidal terpenoid with a tetracyclic cage-like core connected to dimethylcadaverine via a C-N bond and acylated with 5,5-dimethyl-L-pipecolate. The tetracyclic core is synthesized by the terpene cyclase flvE and the cytochrome P450 monooxygenase flvD. The terpene cyclase flvE catalyzes the cyclization of farnesyl pyrophosphate (FPP) to form (1R,4R,5S)-(+)-acoradiene and the cytochrome P450 monooxygenase flvD is then responsible for oxidative conversion of (1R,4R,5S)-(+)-acoradiene into the tetracyclic cage present in the final product flavunoidine. In parallel, the N-methyltransferase flvH dimethylates L-lysine to give N,N-dimethyl-L-Lysin which is decarboxylated by flvG to afford dimethylcadaverine. The terpene cyclase-like protein flvF is the enzyme that attaches the dimethylcadaverine precusor at the C-7 of the tetracyclic cage to yield pre-flavunoidine. The cytochrome monooxygenase flvC hydroxylates the C-10 position of pre-flavunoidine whereas the NRPS flvI acylates the terpenoid core at the hydroxylated C-10 with dimethylpipecolate to yield final flavunoidine. The bifunctional enzyme flvA and the dehydrogenase flvB are responsible for the synthesis of the dimethylpipecolate precursor. The PLP-dependent lyase domain of flvA might use L-O-acetyl-homoserine and alpha-keto-isovalerate to form an intermediary ketone that can cyclize intramolecularly to yield an imine. The imine can be reduced by flvB to yield the 6-carboxylated pipecolate. The C-terminal alpha-KG-dependent oxygenase domain of flvA is then proposed to catalyze the decarboxylation to yield dimethylpipecolate. This is Cytochrome P450 monooxygenase flvC from Aspergillus flavus (strain ATCC 200026 / FGSC A1120 / IAM 13836 / NRRL 3357 / JCM 12722 / SRRC 167).